We begin with the raw amino-acid sequence, 475 residues long: Gustatory and pheromone receptor 33a (475 aa).

The Cytoplasmic segment spans residues 1-34; it reads MIQIMNWFSMVIGLIPLNRQQSETNFILDYAMMC. The helical transmembrane segment at 35–55 threads the bilayer; sequence IVPIFYVACYLLINLSHIIGL. Residues 56–68 are Extracellular-facing; sequence CLLDSCNSVCKLS. A helical membrane pass occupies residues 69–89; the sequence is SHLFMHLGAFLYLTITLLSLY. Residues 90–128 are Cytoplasmic-facing; that stretch reads RRKEFFQQFDARLNDIDAVIQKCQRVAEMDKVKVTAVKH. Residues 129-149 traverse the membrane as a helical segment; sequence SVAYHFTWLFLFCVFTFALYY. Residues 150 to 158 lie on the Extracellular side of the membrane; the sequence is DVRSLYLTF. Residues 159-179 traverse the membrane as a helical segment; it reads GNLAFIPFMVSSFPYLAGSII. At 180 to 319 the chain is on the cytoplasmic side; it reads QGEFIYHVSV…LALSVITNGE (140 aa). A disordered region spans residues 243–281; it reads TGFGNENKFAGEMKRQEGQQKNDDDDLDTSNDEDEDDFD. Residues 251-264 are compositionally biased toward basic and acidic residues; sequence FAGEMKRQEGQQKN. Over residues 265–281 the composition is skewed to acidic residues; sequence DDDDLDTSNDEDEDDFD. The helical transmembrane segment at 320–340 threads the bilayer; that stretch reads FGPQCVPYMAACFVVSIFGIF. The Extracellular segment spans residues 341–357; it reads LETKVNFIVGGKSRLLD. A helical transmembrane segment spans residues 358-378; sequence YMTYLYVIWSFTTMMVAYIVL. At 379–441 the chain is on the cytoplasmic side; sequence RLCCNANNHS…FNGVGLFALD (63 aa). The helical transmembrane segment at 442 to 462 threads the bilayer; it reads YTFIFSTVSAATSYLIVLLQF. At 463–475 the chain is on the extracellular side; it reads DMTAILRNEGLMS.

Belongs to the insect chemoreceptor superfamily. Gustatory receptor (GR) family. Gr66a subfamily. In terms of tissue distribution, expressed widely in gustatory receptor neurons (GRNs) that respond to aversive chemicals. In larvae, is expressed in neurons of the terminal external chemosensory organ, and the dorsal, ventral and posterior external chemosensory organs.

Its subcellular location is the cell membrane. Functionally, gustatory receptor which mediates acceptance or avoidance behavior, depending on its substrates. Required for sensing all nonvolatile repulsive chemicals, including tastants, pheromones, and especially N,N-Diethyl-meta-toluamide (DEET), the most widely used insect repellent worldwide. Also functions as a pheromone receptor for a male inhibitory pheromone leading to male-male courtship suppression. This chain is Gustatory and pheromone receptor 33a (Gr33a), found in Drosophila melanogaster (Fruit fly).